Consider the following 786-residue polypeptide: Spermatogenesis-associated protein 20 (786 aa).

The first 22 residues, methionine 1–alanine 22, serve as a signal peptide directing secretion. Residues alanine 23–valine 61 form a disordered region. Serine 649 carries the post-translational modification Phosphoserine.

It is found in the secreted. In terms of biological role, may play a role in fertility regulation. In Homo sapiens (Human), this protein is Spermatogenesis-associated protein 20 (SPATA20).